A 166-amino-acid chain; its full sequence is KH homology domain-containing protein 1A (166 aa).

The 60-residue stretch at 19 to 78 (PLVFDMEEDKEDYIFGPHDEYLHTLEVHSNTLIQLERWFTPTGQTRVTVVGPLKARLWVM) folds into the KH; atypical domain.

It belongs to the KHDC1 family.

The protein resides in the cytoplasm. Its function is as follows. Has pro-apoptotic activity. The sequence is that of KH homology domain-containing protein 1A (Khdc1a) from Mus musculus (Mouse).